The sequence spans 433 residues: 3-phosphoshikimate 1-carboxyvinyltransferase (433 aa).

Positions 20, 21, and 25 each coordinate 3-phosphoshikimate. Lysine 20 contacts phosphoenolpyruvate. Phosphoenolpyruvate-binding residues include glycine 92 and arginine 121. 3-phosphoshikimate is bound by residues serine 167, serine 168, glutamine 169, serine 195, aspartate 315, and lysine 342. Glutamine 169 provides a ligand contact to phosphoenolpyruvate. Aspartate 315 functions as the Proton acceptor in the catalytic mechanism. The phosphoenolpyruvate site is built by arginine 346 and arginine 388.

Belongs to the EPSP synthase family. As to quaternary structure, monomer.

Its subcellular location is the cytoplasm. It catalyses the reaction 3-phosphoshikimate + phosphoenolpyruvate = 5-O-(1-carboxyvinyl)-3-phosphoshikimate + phosphate. It functions in the pathway metabolic intermediate biosynthesis; chorismate biosynthesis. Functionally, catalyzes the transfer of the enolpyruvyl moiety of phosphoenolpyruvate (PEP) to the 5-hydroxyl of shikimate-3-phosphate (S3P) to produce enolpyruvyl shikimate-3-phosphate and inorganic phosphate. The polypeptide is 3-phosphoshikimate 1-carboxyvinyltransferase (Methanococcus aeolicus (strain ATCC BAA-1280 / DSM 17508 / OCM 812 / Nankai-3)).